The chain runs to 614 residues: Fem-3 mRNA-binding factor 1 (614 aa).

Residues 1–24 (MDQSKMRYTNQFRKTPQKPTSTEV) show a composition bias toward polar residues. The segment at 1-34 (MDQSKMRYTNQFRKTPQKPTSTEVGNHHTPAHSP) is disordered. A PUM-HD domain is found at 160–564 (TRSNNVLPTW…KMIETLAHLR (405 aa)). 8 Pumilio repeats span residues 185-223 (EVLDSGDLMKFAVDKTGCQFLEKAVKGSLTSYQKFQLFE), 224-263 (QVIGRKDDFLKLSTNIFGNYFVQEIIGMSLTTYDDDNIKR), 269-305 (NFISSQMTDMCLDKFACRVIQSSLQNMDLSLACKLVQ), 306-342 (ALPRDARLIAICVDQNANHVIQKVVAVIPLKNWEFIV), 343-382 (DFVATPEHLRQICFDKYGCRVVQTIIEKLTADSINVDLTS), 398-434 (SVTNRCQELATNEYANYIIQHIVSNDDLAVYRECIIE), 436-471 (CLMRNLLSLSQEKFASHVVEKAFLHAPMELLAEMMD), and 483-519 (TGKDALDIMMFHQFGNYVVQCMLTICCDAVSGRRQTK). Positions 283-614 (FACRVIQSSL…NLRLMRTFSP (332 aa)) are binding to gld-3 isoform A.

As to quaternary structure, interacts (via C-terminus) with gld-3 isoform A in an RNA-independent manner. As to expression, expressed specifically in the germline (at protein level).

The protein localises to the cytoplasm. Its function is as follows. RNA-binding protein that binds to the consensus sequence 5'-UGUGCCAUA-3' in mRNA 3'-UTRs. Involved in the control of stem cells and sex determination in the C.elegans hermaphrodite germline. May also play a role in the hermaphrodite germline proliferation and oogenesis. Binds specifically to the regulatory region of fem-3 3'-UTR and mediates the sperm/oocyte switch. Negatively regulates gld-3 expression, possibly by directly binding to two sites within the 3'-UTR of gld-3 isoform b. In association with the cye-1/cdk-2 complex, negatively regulates gld-1 expression in the distal germline cells of the mitotic zone. By binding to the 3'-UTR, represses phosphatase lip-1 expression in the distal part of the germline mitotic zone. Suppresses germline tumor formation by preventing the dedifferentiation of secondary spermatocytes. The protein is Fem-3 mRNA-binding factor 1 (fbf-1) of Caenorhabditis elegans.